We begin with the raw amino-acid sequence, 432 residues long: D-amino acid dehydrogenase (432 aa).

Residue 3–17 (VVILGSGVVGVTSAW) participates in FAD binding.

This sequence belongs to the DadA oxidoreductase family. The cofactor is FAD.

It localises to the cell inner membrane. The catalysed reaction is a D-alpha-amino acid + A + H2O = a 2-oxocarboxylate + AH2 + NH4(+). It participates in amino-acid degradation; D-alanine degradation; NH(3) and pyruvate from D-alanine: step 1/1. In terms of biological role, oxidative deamination of D-amino acids. This chain is D-amino acid dehydrogenase, found in Salmonella typhi.